Consider the following 485-residue polypeptide: Carbohydrate sulfotransferase 7 (485 aa).

Topologically, residues 1-12 (MKGRRRRRREYC) are cytoplasmic. Residues 13 to 33 (KFTLLLALYTLLLLLVPSVLD) form a helical; Signal-anchor for type II membrane protein membrane-spanning segment. Over 34–485 (SGSEQDKGGR…PLETNANWAT (452 aa)) the chain is Lumenal. Positions 66 to 88 (EQGAEVRFQAEGNPDRSPRPQGN) are disordered. Residue Asn-88 is glycosylated (N-linked (GlcNAc...) asparagine). Residue 109-115 (WRTGSSF) participates in 3'-phosphoadenylyl sulfate binding. The N-linked (GlcNAc...) asparagine glycan is linked to Asn-185. Residue 277 to 285 (RDPRAVHNS) participates in 3'-phosphoadenylyl sulfate binding. Asn-406 carries N-linked (GlcNAc...) asparagine glycosylation. Ser-461 carries the phosphoserine modification. A compositionally biased stretch (basic and acidic residues) spans 465–475 (RDVKTVRKGET). Residues 465–485 (RDVKTVRKGETPLETNANWAT) form a disordered region.

Belongs to the sulfotransferase 1 family. Gal/GlcNAc/GalNAc subfamily.

The protein resides in the golgi apparatus membrane. The catalysed reaction is chondroitin beta-D-glucuronate + n 3'-phosphoadenylyl sulfate = chondroitin 6'-sulfate + n adenosine 3',5'-bisphosphate + n H(+). In terms of biological role, sulfotransferase that utilizes 3'-phospho-5'-adenylyl sulfate (PAPS) as sulfonate donor to catalyze the transfer of sulfate to position 6 of non-reducing N-acetylglucosamine (GlcNAc) residues. Preferentially acts on mannose-linked GlcNAc. Also able to catalyze the transfer of sulfate to position 6 of the N-acetylgalactosamine (GalNAc) residue of chondroitin. Also acts on core 2 mucin-type oligosaccharide and N-acetyllactosamine oligomer with a lower efficiency. Has weak or no activity toward keratan sulfate and oligosaccharides containing the Galbeta1-4GlcNAc. Catalyzes 6-O-sulfation of beta-benzyl GlcNAc but not alpha- or beta-benzyl GalNAc. This chain is Carbohydrate sulfotransferase 7 (Chst7), found in Rattus norvegicus (Rat).